The primary structure comprises 217 residues: Octanoyltransferase (217 aa).

The 176-residue stretch at 32-207 (DDSADEIWLV…HMIKKLNATQ (176 aa)) folds into the BPL/LPL catalytic domain. Substrate contacts are provided by residues 71 to 78 (RGGQVTYH), 138 to 140 (SLG), and 151 to 153 (GLA). C169 functions as the Acyl-thioester intermediate in the catalytic mechanism.

Belongs to the LipB family.

Its subcellular location is the cytoplasm. The enzyme catalyses octanoyl-[ACP] + L-lysyl-[protein] = N(6)-octanoyl-L-lysyl-[protein] + holo-[ACP] + H(+). It participates in protein modification; protein lipoylation via endogenous pathway; protein N(6)-(lipoyl)lysine from octanoyl-[acyl-carrier-protein]: step 1/2. Its function is as follows. Catalyzes the transfer of endogenously produced octanoic acid from octanoyl-acyl-carrier-protein onto the lipoyl domains of lipoate-dependent enzymes. Lipoyl-ACP can also act as a substrate although octanoyl-ACP is likely to be the physiological substrate. The chain is Octanoyltransferase from Pseudoalteromonas translucida (strain TAC 125).